Reading from the N-terminus, the 461-residue chain is ATP synthase subunit beta 2 (461 aa).

151–158 (GGAGVGKT) serves as a coordination point for ATP.

This sequence belongs to the ATPase alpha/beta chains family. As to quaternary structure, F-type ATPases have 2 components, CF(1) - the catalytic core - and CF(0) - the membrane proton channel. CF(1) has five subunits: alpha(3), beta(3), gamma(1), delta(1), epsilon(1). CF(0) has three main subunits: a(1), b(2) and c(9-12). The alpha and beta chains form an alternating ring which encloses part of the gamma chain. CF(1) is attached to CF(0) by a central stalk formed by the gamma and epsilon chains, while a peripheral stalk is formed by the delta and b chains.

Its subcellular location is the cell inner membrane. It carries out the reaction ATP + H2O + 4 H(+)(in) = ADP + phosphate + 5 H(+)(out). Produces ATP from ADP in the presence of a proton gradient across the membrane. The catalytic sites are hosted primarily by the beta subunits. This chain is ATP synthase subunit beta 2, found in Vibrio campbellii (strain ATCC BAA-1116).